We begin with the raw amino-acid sequence, 342 residues long: Foldase protein PrsA (342 aa).

The N-terminal stretch at 1–22 is a signal peptide; sequence MVSVKKIVASALVGVLMFSAVG. Cys-23 is lipidated: N-palmitoyl cysteine. The S-diacylglycerol cysteine moiety is linked to residue Cys-23. Residues 190-284 enclose the PpiC domain; it reads AKGVLARHLL…FGYHIIQAGA (95 aa).

Belongs to the PrsA family.

The protein localises to the cell membrane. It catalyses the reaction [protein]-peptidylproline (omega=180) = [protein]-peptidylproline (omega=0). Its function is as follows. Plays a major role in protein secretion by helping the post-translocational extracellular folding of several secreted proteins. In Clostridium perfringens (strain SM101 / Type A), this protein is Foldase protein PrsA.